An 87-amino-acid polypeptide reads, in one-letter code: Small ribosomal subunit protein bS20 (87 aa).

This sequence belongs to the bacterial ribosomal protein bS20 family.

In terms of biological role, binds directly to 16S ribosomal RNA. This Corynebacterium diphtheriae (strain ATCC 700971 / NCTC 13129 / Biotype gravis) protein is Small ribosomal subunit protein bS20.